The chain runs to 353 residues: Probable transport protein YPL264C (353 aa).

The Cytoplasmic segment spans residues 1–16 (MTLQRISKDYLKPNYG). Residues 17–37 (LILLIVSYFFNSSMVVSTKVL) form a helical membrane-spanning segment. In terms of domain architecture, EamA 1 spans 24–160 (YFFNSSMVVS…SFSGVVLIIR (137 aa)). Residues 38-51 (ENDPLETSQSRINP) lie on the Extracellular side of the membrane. Residues 52–69 (LQILLVRMSITYCCTLVY) form a helical membrane-spanning segment. Topologically, residues 70 to 94 (MHWNKQSVPDIPWGPAPCRKWLILR) are cytoplasmic. A helical transmembrane segment spans residues 95 to 115 (GIMGFFGVFGMYFSLMYLSIS). Position 116 (aspartate 116) is a topological domain, extracellular. Residues 117–137 (AVLITFMSPTLTIFLSFLLLG) form a helical membrane-spanning segment. Residues 138-144 (EPFSKLE) are Cytoplasmic-facing. Residues 145-165 (ALGSLISFSGVVLIIRPTFLF) traverse the membrane as a helical segment. At 166–188 (GEQTQGQQSPQDDIVETQNPKLR) the chain is on the extracellular side. Residues 189 to 209 (LIAIGVSLLGVCGLSSVYIII) traverse the membrane as a helical segment. One can recognise an EamA 2 domain in the interval 200–326 (CGLSSVYIII…IVSSTIWVIN (127 aa)). Over 210–218 (RYIGNKAHA) the chain is Cytoplasmic. Residues 219-239 (IMSVSYFSLVTTVVAALGVLL) form a helical membrane-spanning segment. Residues 240–254 (IPSMSLQLPHSWKQW) lie on the Extracellular side of the membrane. A helical membrane pass occupies residues 255–275 (GLFLNLGISGFIHQILLTMGI). The Cytoplasmic segment spans residues 276 to 282 (QRERAGR). Residues 283 to 303 (GSLMTYTQVIYAVFWDVVLFH) form a helical membrane-spanning segment. A topological domain (extracellular) is located at residue histidine 304. A helical membrane pass occupies residues 305-325 (WPNIWTWCGMAVIVSSTIWVI). The Cytoplasmic segment spans residues 326 to 353 (NMRASKQNVVATAELLSTSDFELDDLED).

Its subcellular location is the membrane. The chain is Probable transport protein YPL264C from Saccharomyces cerevisiae (strain ATCC 204508 / S288c) (Baker's yeast).